An 84-amino-acid polypeptide reads, in one-letter code: Tetrahydromethanopterin S-methyltransferase subunit G (84 aa).

A helical membrane pass occupies residues 50 to 70 (IGILYGLVIGIILSYILPALI).

Belongs to the MtrG family. As to quaternary structure, the complex is composed of 8 subunits; MtrA, MtrB, MtrC, MtrD, MtrE, MtrF, MtrG and MtrH.

It is found in the cell membrane. It carries out the reaction 5-methyl-5,6,7,8-tetrahydromethanopterin + coenzyme M + 2 Na(+)(in) = 5,6,7,8-tetrahydromethanopterin + methyl-coenzyme M + 2 Na(+)(out). The protein operates within one-carbon metabolism; methanogenesis from CO(2); methyl-coenzyme M from 5,10-methylene-5,6,7,8-tetrahydromethanopterin: step 2/2. Part of a complex that catalyzes the formation of methyl-coenzyme M and tetrahydromethanopterin from coenzyme M and methyl-tetrahydromethanopterin. This is an energy-conserving, sodium-ion translocating step. The polypeptide is Tetrahydromethanopterin S-methyltransferase subunit G (Methanocaldococcus jannaschii (strain ATCC 43067 / DSM 2661 / JAL-1 / JCM 10045 / NBRC 100440) (Methanococcus jannaschii)).